The chain runs to 2462 residues: Piezo-type mechanosensitive ion channel homolog (2462 aa).

Transmembrane regions (helical) follow at residues 5–25 (LVGFLLPSLLLAAALINWSVI), 27–47 (FLDLIAFLLVHYIAPEIGYRF), 57–77 (IFIFSFAVFLAQVVYLVIWAA), 105–125 (TVMYFLALQLLTSLVALADIY), 163–183 (AVQLAVGICNPSWVSLPFFIG), 207–227 (LYIYAGFNIVLLYLYQLPINF), 248–268 (EGPDICSGLFLVLFYIMLSYV), 325–345 (FFTYGFPVSLFALSFWSFHFA), 347–367 (LCAFGLLAYVGYIIYAFPSLF), 374–394 (GLLLVFILLWAVSTYIFNVAF), 404–424 (FGLGMLVALGNLVNNSVFLYL), 467–487 (LIFLIAMKPGFFHAVYVIFFL), 502–522 (SLILLCEVHFALLYILEIDLV), 554–574 (IALLACFCAIHNHGFEVLFSF), 653–673 (VYLVKPNYVSFGYIFLLLLWI), 694–714 (AVLVFMFIYCLSSFVSLQLWL), 730–750 (APLLDNVWESLAVLIVMQLYS), 792–812 (FYASLSPISVFGFVYLLGLVI), and 826–846 (SFLIYTGFLVSAEYLFQLWGM). A disordered region spans residues 927 to 947 (ASVSSSNGENPSSTDHASISM). Residues 928-939 (SVSSSNGENPSS) are compositionally biased toward low complexity. Helical transmembrane passes span 1027 to 1047 (FWIENMFNLYGLEINMIALLL), 1050 to 1070 (FALLNAISMVYIALLAACVLL), 1078 to 1098 (LWPVVVFLFASILAIEYVATW), 1143 to 1160 (TLISYFVVFMLACFKLRA), 1204 to 1224 (LYCYVHLLDVVLILILITGTL), 1228 to 1248 (ILHLGYLAFALVFARMRLEIL), 1260 to 1280 (VYNFVLIIFSLAYQSPFVGNF), and 1310 to 1330 (SALVEIIIFMLVSLQSYMFSS). The stretch at 1347-1400 (AIVREQEKKAARKTEQLQQIREAEEKKRQRNLQVEKMKSEMLNLRVQLHRMNSD) forms a coiled coil. Positions 1543–1583 (SDTNEQSSVDDEVYDEMESQKRKHTPFERSTSLQSDRSSDG) are disordered. A compositionally biased stretch (acidic residues) spans 1550 to 1559 (SVDDEVYDEM). Positions 1570–1583 (ERSTSLQSDRSSDG) are enriched in polar residues. The next 8 helical transmembrane spans lie at 1611–1631 (FIIAFLWNFSLLSMVYLAALF), 1647–1667 (VIMLMYTEIYILLQYLYQIII), 1916–1936 (YIFGADLIVFFLVAIFYQSVI), 1956–1976 (FVIILMVIFFLIVVDRVIYLC), 1984–2004 (VYYLFSLILFTYAVTEYAWSI), 2012–2032 (AGLALRIIFLAKAMSLALQAI), 2130–2150 (GICLFFILLCVIWAPMLMYSS), and 2369–2389 (FLGDTLSKFSIWGLYITFVLA).

This sequence belongs to the PIEZO (TC 1.A.75) family.

The protein localises to the membrane. In terms of biological role, pore-forming subunit of a mechanosensitive non-specific cation channel, that conducts both sodium and potassium ions. The sequence is that of Piezo-type mechanosensitive ion channel homolog from Arabidopsis thaliana (Mouse-ear cress).